The following is a 262-amino-acid chain: Hydroxyethylthiazole kinase (262 aa).

Methionine 39 provides a ligand contact to substrate. ATP contacts are provided by lysine 115 and threonine 160. Glycine 187 provides a ligand contact to substrate.

The protein belongs to the Thz kinase family. It depends on Mg(2+) as a cofactor.

The catalysed reaction is 5-(2-hydroxyethyl)-4-methylthiazole + ATP = 4-methyl-5-(2-phosphooxyethyl)-thiazole + ADP + H(+). The protein operates within cofactor biosynthesis; thiamine diphosphate biosynthesis; 4-methyl-5-(2-phosphoethyl)-thiazole from 5-(2-hydroxyethyl)-4-methylthiazole: step 1/1. Its function is as follows. Catalyzes the phosphorylation of the hydroxyl group of 4-methyl-5-beta-hydroxyethylthiazole (THZ). The chain is Hydroxyethylthiazole kinase from Staphylococcus epidermidis (strain ATCC 12228 / FDA PCI 1200).